The following is a 172-amino-acid chain: WW domain binding protein VOPP1 (172 aa).

The first 22 residues, Met1–Ala22, serve as a signal peptide directing secretion. Residues Lys23–Leu60 are Extracellular-facing. The chain crosses the membrane as a helical span at residues Trp61–Ile81. The Cytoplasmic portion of the chain corresponds to Arg82–Lys172. Residues Arg102–Pro153 are disordered. Over residues Pro104–Tyr119 the composition is skewed to pro residues.

This sequence belongs to the VOPP1/ECOP family. As to quaternary structure, interacts with WWOX (via WW domain). Widely expressed with highest levels in thymus and ovary.

It localises to the cytoplasmic vesicle membrane. It is found in the late endosome membrane. The protein localises to the lysosome membrane. Functionally, increases the transcriptional activity of NFKB1 by facilitating its nuclear translocation, DNA-binding and associated apoptotic response, when overexpressed. May sequester WWOX in lysosomal vesicles and thereby regulate WWOX role as tumor suppressor. This chain is WW domain binding protein VOPP1, found in Homo sapiens (Human).